Consider the following 148-residue polypeptide: Cathelicidin-1 (148 aa).

Positions 1-17 are cleaved as a signal peptide; sequence MLSCWVLLLALLGGACA. Residues 18 to 122 constitute a propeptide that is removed on maturation; it reads LPAPLGYSQA…TCVDSMADPV (105 aa). Cystine bridges form between cysteine 75/cysteine 86 and cysteine 97/cysteine 114.

Belongs to the cathelicidin family. As to expression, detected in gizzard, liver, small intestine, large intestine, cloaca, bursa of Fabricius, gall bladder, lung, trachea, kidney, testis and bone marrow.

It localises to the secreted. In terms of biological role, binds bacterial lipopolysaccharide (LPS). Has potent antimicrobial activity against Gram-positive and Gram-negative bacteria (in vitro). Has hemolytic activity (in vitro). May play a role in the innate immune response. This Gallus gallus (Chicken) protein is Cathelicidin-1 (CATHL1).